Here is a 1703-residue protein sequence, read N- to C-terminus: Mediator of RNA polymerase II transcription subunit 14 (1703 aa).

A compositionally biased stretch (polar residues) spans 755–766 (LSQTADLATSSA). The segment at 755-781 (LSQTADLATSSAGPLLRKDQKPRKRSA) is disordered.

Belongs to the Mediator complex subunit 14 family. Component of the Mediator complex. Interacts with CDKE-1, HDA19 and LUG. Interacts with PTAC12/HMR/PAP5 and PIF4. As to expression, expressed in roots, stems, developing embryos, young leaf primordia, shoot apical meristems, inflorescence meristems, tapetum in anthers, ovules and floral organ primordia, but not in mature organs.

The protein localises to the nucleus. In terms of biological role, component of the Mediator complex, a coactivator involved in the regulated transcription of nearly all RNA polymerase II-dependent genes. Mediator functions as a bridge to convey information from gene-specific regulatory proteins to the basal RNA polymerase II transcription machinery. The Mediator complex, having a compact conformation in its free form, is recruited to promoters by direct interactions with regulatory proteins and serves for the assembly of a functional pre-initiation complex with RNA polymerase II and the general transcription factors. Binds to G-box (5'-CACGTG-3')-containing regions of target genes promoters (e.g. IAA29 and IAA19). Involved in defining the duration of cell proliferation. Element of a PIF4/HMR/MED14-dependent thermoresponsive process; required for thermomorphogenetic hypocotyl growth in response to daytime warm temperature elicitation by associating to the promoters of thermoresponsive growth-relevant genes (e.g. mainly involved in biosynthesis and signaling of the phytohormone auxin); this also process implies PIF4 and its transcriptional coactivator PTAC12/HMR/PAP5 to promote the expression of target genes. This is Mediator of RNA polymerase II transcription subunit 14 from Arabidopsis thaliana (Mouse-ear cress).